The primary structure comprises 259 residues: Ubiquinone/menaquinone biosynthesis C-methyltransferase UbiE (259 aa).

Residues T82, D103, 131 to 132 (NA), and S148 contribute to the S-adenosyl-L-methionine site.

Belongs to the class I-like SAM-binding methyltransferase superfamily. MenG/UbiE family.

It carries out the reaction a 2-demethylmenaquinol + S-adenosyl-L-methionine = a menaquinol + S-adenosyl-L-homocysteine + H(+). It catalyses the reaction a 2-methoxy-6-(all-trans-polyprenyl)benzene-1,4-diol + S-adenosyl-L-methionine = a 5-methoxy-2-methyl-3-(all-trans-polyprenyl)benzene-1,4-diol + S-adenosyl-L-homocysteine + H(+). Its pathway is quinol/quinone metabolism; menaquinone biosynthesis; menaquinol from 1,4-dihydroxy-2-naphthoate: step 2/2. The protein operates within cofactor biosynthesis; ubiquinone biosynthesis. Functionally, methyltransferase required for the conversion of demethylmenaquinol (DMKH2) to menaquinol (MKH2) and the conversion of 2-polyprenyl-6-methoxy-1,4-benzoquinol (DDMQH2) to 2-polyprenyl-3-methyl-6-methoxy-1,4-benzoquinol (DMQH2). The polypeptide is Ubiquinone/menaquinone biosynthesis C-methyltransferase UbiE (Vibrio parahaemolyticus serotype O3:K6 (strain RIMD 2210633)).